Here is a 216-residue protein sequence, read N- to C-terminus: Dimethylamine corrinoid protein 1 (216 aa).

The region spanning 1–91 (MTSKEELLQE…DMPAGTETKK (91 aa)) is the B12-binding N-terminal domain. Residues 92–216 (LGVIVNGTVE…AKAKELLVGK (125 aa)) form the B12-binding domain. H105 is a methylcob(III)alamin binding site.

This sequence belongs to the methylamine corrinoid protein family.

Its pathway is one-carbon metabolism; methanogenesis from dimethylamine. Functionally, acts as a methyl group carrier between MtbB and MtbA. This Methanosarcina mazei (strain ATCC BAA-159 / DSM 3647 / Goe1 / Go1 / JCM 11833 / OCM 88) (Methanosarcina frisia) protein is Dimethylamine corrinoid protein 1 (mtbC1).